Here is a 415-residue protein sequence, read N- to C-terminus: Phosphoribosylamine--glycine ligase (415 aa).

An ATP-grasp domain is found at 108–311; the sequence is KKIMEKYNIP…LMQHIIDLDE (204 aa). 134 to 191 is an ATP binding site; the sequence is IENCELPVVVKKDGLAAGKGVIIADTIEAARSAIEIMYGDEEEGTVVFETFLEGEEFS. 2 residues coordinate Mg(2+): glutamate 281 and asparagine 283.

This sequence belongs to the GARS family. Mg(2+) is required as a cofactor. Requires Mn(2+) as cofactor.

The enzyme catalyses 5-phospho-beta-D-ribosylamine + glycine + ATP = N(1)-(5-phospho-beta-D-ribosyl)glycinamide + ADP + phosphate + H(+). The protein operates within purine metabolism; IMP biosynthesis via de novo pathway; N(1)-(5-phospho-D-ribosyl)glycinamide from 5-phospho-alpha-D-ribose 1-diphosphate: step 2/2. This Staphylococcus aureus (strain MW2) protein is Phosphoribosylamine--glycine ligase.